The primary structure comprises 283 residues: SNAP25 homologous protein SNAP32 (283 aa).

Disordered regions lie at residues 1–64 (MSGR…AAAR) and 192–212 (LGLSDHPPQSNARQFHSEPTS). Over residues 198-212 (PPQSNARQFHSEPTS) the composition is skewed to polar residues. The t-SNARE coiled-coil homology domain occupies 218 to 280 (EMEKAKQDDG…KGANTRARRL (63 aa)).

It belongs to the SNAP-25 family. In terms of assembly, interacts with SYP121. Expressed in roots, culms and leaves.

The protein resides in the membrane. T-SNARE involved in diverse vesicle trafficking and membrane fusion processes. May be involved in resistance to the rice blast fungus Magnaporthe oryzae. May contribute to host resistance to rice blast through interaction with SYP121. The protein is SNAP25 homologous protein SNAP32 of Oryza sativa subsp. japonica (Rice).